The chain runs to 436 residues: GTPase Der (436 aa).

EngA-type G domains follow at residues 4–167 (PIVA…NKES) and 176–351 (IRLS…ENHK). Residues 10 to 17 (GKPNVGKS), 57 to 61 (DTGGI), 119 to 122 (NKVD), 182 to 189 (GRPNVGKS), 229 to 233 (DTAGM), and 294 to 297 (NKWD) each bind GTP. In terms of domain architecture, KH-like spans 352 to 436 (KRVQSSTLNE…PIHIIPRKRN (85 aa)).

It belongs to the TRAFAC class TrmE-Era-EngA-EngB-Septin-like GTPase superfamily. EngA (Der) GTPase family. In terms of assembly, associates with the 50S ribosomal subunit.

In terms of biological role, GTPase that plays an essential role in the late steps of ribosome biogenesis. This is GTPase Der from Staphylococcus epidermidis (strain ATCC 35984 / DSM 28319 / BCRC 17069 / CCUG 31568 / BM 3577 / RP62A).